A 412-amino-acid polypeptide reads, in one-letter code: Gamma-glutamyl phosphate reductase (412 aa).

The protein belongs to the gamma-glutamyl phosphate reductase family.

Its subcellular location is the cytoplasm. It carries out the reaction L-glutamate 5-semialdehyde + phosphate + NADP(+) = L-glutamyl 5-phosphate + NADPH + H(+). It functions in the pathway amino-acid biosynthesis; L-proline biosynthesis; L-glutamate 5-semialdehyde from L-glutamate: step 2/2. Its function is as follows. Catalyzes the NADPH-dependent reduction of L-glutamate 5-phosphate into L-glutamate 5-semialdehyde and phosphate. The product spontaneously undergoes cyclization to form 1-pyrroline-5-carboxylate. The sequence is that of Gamma-glutamyl phosphate reductase from Lactiplantibacillus plantarum (strain ATCC BAA-793 / NCIMB 8826 / WCFS1) (Lactobacillus plantarum).